The following is a 311-amino-acid chain: 3-oxo-4,17-pregnadiene-20-carboxyl-CoA hydratase alpha subunit (311 aa).

Positions 198–295 (WDGVKAHELR…VAIGMPVRAT (98 aa)) are DUF35.

It belongs to the thioester dehydratase family. As to quaternary structure, heterodimer composed of ChsH1 and ChsH2. Two heterodimers combine to form a heterotetramer. The complex interacts with Ltp2 via the DUF35 C-terminal region of ChsH2. The ChsH1-ChsH2-Ltp2 protein complex is composed of two protomers that form a heterohexameric structure through the Ltp2 dimerization interface.

The catalysed reaction is 3-oxochola-4,17-dien-22-oyl-CoA + H2O = 17-hydroxy-3-oxochol-4-en-22-oyl-CoA. It carries out the reaction (2E)-octenoyl-CoA + H2O = 3-hydroxyoctanoyl-CoA. The enzyme catalyses (2E)-decenoyl-CoA + H2O = 3-hydroxydecanoyl-CoA. It functions in the pathway steroid metabolism; cholesterol degradation. In the absence of the Ltp2 aldolase, ChsH1/ChsH2 can hydrate only about 30% of the 3-OPDC-CoA substrate. Complete turnover requires the presence of Ltp2. Its function is as follows. Involved in cholesterol side chain degradation. Catalyzes the hydration of 3-oxo-4,17-pregnadiene-20-carboxyl-CoA (3-OPDC-CoA) to form 17-hydroxy-3-oxo-4-pregnene-20-carboxyl-CoA (17-HOPC-CoA), in the modified beta-oxidation pathway for cholesterol side chain degradation. Can also use octenoyl-CoA and decenoyl-CoA, with lower efficiency. The chain is 3-oxo-4,17-pregnadiene-20-carboxyl-CoA hydratase alpha subunit from Mycobacterium tuberculosis (strain ATCC 25618 / H37Rv).